The sequence spans 147 residues: Small ribosomal subunit protein bS16m (147 aa).

This sequence belongs to the bacterial ribosomal protein bS16 family. Component of the mitochondrial ribosome small subunit (28S) which comprises a 12S rRNA and about 30 distinct proteins.

It is found in the mitochondrion. The protein is Small ribosomal subunit protein bS16m (mrps-16) of Caenorhabditis elegans.